Here is a 562-residue protein sequence, read N- to C-terminus: MPLKSFFFSAFLVLCLSKFTQGVGTTEKEESLSPLELNILQNKFASYYANDTITVKGITIGGWLVTEPYITPSLYRNATSLAKQQNSSSNISIVDEFTLCKTLGYNTSLTLLDNHFKTWITEDDFEQIKTNGFNLVRIPIGYWAWKQNTDKNLYIDNITFNDPYVSDGLQLKYLNNALEWAQKYELNVWLDLHGAPGSQNGFDNSGERILYGDLGWLRLNNTKELTLAIWRDMFQTFLNKGDKSPVVGIQIVNEPLGGKIDVSDITEMYYEAFDLLKKNQNSSDNTTFVIHDGFQGIGHWNLELNPTYQNVSHHYFNLTGANYSSQDILVDHHHYEVFTDAQLAETQFARIENIINYGDSIHKELSFHPAVVGEWSGAITDCATWLNGVGVGARYDGSYYNTTLFTTNDKPVGTCISQNSLADWTQDYRDRVRQFIEAQLATYSSKTTGWIFWNWKTEDAVEWDYLKLKEANLFPSPFDNYTYFKADGSIEEKFSSSLSAQAFPRTTSSVLSSTTTSRKSKNAAISNKLTTSQLLPIKNMSLTWKASVCALAITIAALCASL.

Residues 1-22 (MPLKSFFFSAFLVLCLSKFTQG) form the signal peptide. N-linked (GlcNAc...) asparagine glycans are attached at residues asparagine 50, asparagine 77, asparagine 86, asparagine 90, asparagine 106, asparagine 157, and asparagine 220. Glutamate 254 serves as the catalytic Proton donor. Residues asparagine 281, asparagine 285, asparagine 310, asparagine 317, and asparagine 322 are each glycosylated (N-linked (GlcNAc...) asparagine). Histidine 334 functions as the Nucleophile in the catalytic mechanism. 3 N-linked (GlcNAc...) asparagine glycosylation sites follow: asparagine 401, asparagine 480, and asparagine 539.

Belongs to the glycosyl hydrolase 5 (cellulase A) family.

It is found in the cell membrane. The enzyme catalyses Successive hydrolysis of beta-D-glucose units from the non-reducing ends of (1-&gt;3)-beta-D-glucans, releasing alpha-glucose.. This is Glucan 1,3-beta-glucosidase 2 (EXG2) from Saccharomyces cerevisiae (strain ATCC 204508 / S288c) (Baker's yeast).